The chain runs to 371 residues: Opsin Rh1 (371 aa).

Over 1–47 (MERYSTPLIGPSFAALTNGSVTDKVTPDMAHLVHPYWNQFPAMEPKW) the chain is Extracellular. An N-linked (GlcNAc...) asparagine glycan is attached at asparagine 18. The chain crosses the membrane as a helical span at residues 48-72 (AKFLAAYMVLIATISWCGNGVVIYI). Residues 73 to 84 (FSTTKSLRTPAN) lie on the Cytoplasmic side of the membrane. Residues 85–110 (LLVINLAISDFGIMITNTPMMGINLF) traverse the membrane as a helical segment. The Extracellular segment spans residues 111-124 (YETWVLGPLMCDIY). Residues cysteine 121 and cysteine 198 are joined by a disulfide bond. The helical transmembrane segment at 125–144 (GGLGSAFGCSSILSMCMISL) threads the bilayer. Over 145 to 163 (DRYNVIVKGMAGQPMTIKL) the chain is Cytoplasmic. Residues 164 to 187 (AIMKIALIWFMASIWTLAPVFGWS) traverse the membrane as a helical segment. Residues 188–211 (RYVPEGNLTSCGIDYLERDWNPRS) are Extracellular-facing. A helical transmembrane segment spans residues 212–239 (YLIFYSIFVYYLPLFLICYSYWFIIAAV). The Cytoplasmic portion of the chain corresponds to 240–274 (SAHEKAMREQAKKMNVKSLRSSEDADKSAEGKLAK). Residues 275-298 (VALVTISLWFMAWTPYTIINTLGL) traverse the membrane as a helical segment. The Extracellular portion of the chain corresponds to 299 to 305 (FKYEGLT). A helical transmembrane segment spans residues 306–330 (PLNTIWGACFAKSAACYNPIVYGIS). Lysine 317 carries the N6-(retinylidene)lysine modification. Topologically, residues 331–371 (HPKYGIALKEKCPCCVFGKVDDGKASDATSQATNNESETKA) are cytoplasmic.

It belongs to the G-protein coupled receptor 1 family. Opsin subfamily. Post-translationally, phosphorylated on some or all of the serine and threonine residues present in the C-terminal region.

It is found in the cell projection. The protein localises to the rhabdomere membrane. Functionally, visual pigments are the light-absorbing molecules that mediate vision. They consist of an apoprotein, opsin, covalently linked to cis-retinal. The sequence is that of Opsin Rh1 (NINAE) from Calliphora vicina (Blue blowfly).